The chain runs to 197 residues: Adrenodoxin-like protein 1, mitochondrial (197 aa).

A mitochondrion-targeting transit peptide spans 1-35 (MIGHRISRLGSTIVKQLAREGYLATYGTKNLHRSY). The 2Fe-2S ferredoxin-type domain occupies 79-184 (EKITIIFVDK…GVRLAIPSAT (106 aa)). C118, C124, C127, and C165 together coordinate [2Fe-2S] cluster.

This sequence belongs to the adrenodoxin/putidaredoxin family. Requires [2Fe-2S] cluster as cofactor.

It is found in the mitochondrion matrix. In terms of biological role, associates in vitro with the adrenodoxin reductase MFDR to form an efficient low potential electron transfer chain that is able to reduce cytochrome C. Functions as accessory mitochondrial protein involved with BIO2 in the plant biotin synthase reaction. This Arabidopsis thaliana (Mouse-ear cress) protein is Adrenodoxin-like protein 1, mitochondrial.